A 256-amino-acid chain; its full sequence is Putative ankyrin repeat protein PAE1861 (256 aa).

ANK repeat units lie at residues Met-1 to Val-30, Tyr-34 to Ala-63, Glu-67 to Val-92, Gly-93 to Ala-122, His-124 to Ala-151, His-155 to Val-184, Ala-188 to Ala-214, and Met-218 to Asp-245.

The chain is Putative ankyrin repeat protein PAE1861 from Pyrobaculum aerophilum (strain ATCC 51768 / DSM 7523 / JCM 9630 / CIP 104966 / NBRC 100827 / IM2).